Consider the following 3364-residue polypeptide: Salivary gland surface protein 1 (3364 aa).

Beta-propeller regions lie at residues 1–344 (MLRI…VVDA) and 705–1216 (FEQE…LKAL). N-linked (GlcNAc...) asparagine glycosylation is present at Asn59. Cystine bridges form between Cys251–Cys297 and Cys1128–Cys1139. The interval 345–2733 (VEPKLDQGSP…PVSQIDPDGQ (2389 aa)) is rhs/YD-repeats. Residue Asn1149 is glycosylated (N-linked (GlcNAc...) asparagine). The interval 1345-1494 (NQELVQFLGF…VHVDHVRLSP (150 aa)) is carbohydrate-binding module (CBM). Residues 1575–1715 (HSWVESFSPY…VGIKDVIVME (141 aa)) form a lectin carbohydrate-recognition domain (lectin-CRD) region. The segment at 2225-2304 (HDKCDQNLIP…SEKMLEQGYP (80 aa)) is wedge domain. 2 disulfide bridges follow: Cys2253–Cys2285 and Cys2407–Cys2421. The next 5 helical transmembrane spans lie at 2734–2754 (IAVT…LGAA), 2774–2794 (IGLF…AATF), 2805–2825 (MIAG…LGAA), 2844–2864 (WNGL…FVGI), and 2878–2898 (MIYA…GGGM). A tox-SGS region spans residues 3126–3216 (YSPDSDGNQI…ARIAPAALRN (91 aa)).

In terms of processing, probably cleaved at the C-terminus. Female saliva (at protein level). Female salivary gland (at protein level). Not detected in female carcass without salivary glands. Not detected in male tissues.

The protein localises to the cell membrane. It localises to the secreted. Its function is as follows. (Microbial infection) Facilitates, but is not essential for, invasion of salivary glands by Plasmodium gallinaceum. Plays a role in Plasmodium gallinaceum oocyst development in mosquito midgut. In terms of biological role, (Microbial infection) Probably facilitates Zika virus replication in salivary glands. This is Salivary gland surface protein 1 from Aedes aegypti (Yellowfever mosquito).